The following is a 339-amino-acid chain: MamK-like protein (339 aa).

ATP is bound by residues 18 to 19 (YS), Asp74, 162 to 164 (AWT), and 216 to 220 (KEQFA).

It belongs to the FtsA/MreB family. MamK subfamily. As to quaternary structure, forms cytoplasmic filament polymers. Forms filaments with MamK.

It is found in the cytoplasm. The protein localises to the cytoskeleton. It carries out the reaction ATP + H2O = ADP + phosphate + H(+). Its function is as follows. Protein with ATPase activity which forms pole-to-pole filaments in vivo, probably with MamK. Efficient filament formation requires MamK. Probably promotes turnover of MamK filaments, by providing a monomer pool. In vivo, in the absence of its paralog MamK, forms thin filaments from pole to pole. In vitro forms straight filaments and bundles in the absence of ATP. Filament formation is triggered by KCl and MgCl(2); polymerizes more slowly and makes thinner filaments than MamK. Expression in E.coli yields a filament in the cell's longitudinal axis; the protein nucleates at one pole or the cell septum. This chain is MamK-like protein, found in Paramagnetospirillum magneticum (strain ATCC 700264 / AMB-1) (Magnetospirillum magneticum).